We begin with the raw amino-acid sequence, 527 residues long: MYQPEDDNNSDVTSDDDMTRNRRESSPPHSVHSFSGDRDWDRRGRSRDMEPRDRWSHTRNPRSRMPPRDLSLPVVAKTSFEMDREDDRDSRAYESRSQDAESYQNVVDLAEDRKPHNTIQDNMENYRKLLSLGFLAQDSVPAEKRNTEMLDNLPSAGSQFPDFKHLGTFLVFEELVTFEDVLVDFSPEELSSLSAAQRNLYREVMLENYRNLVSLGHQFSKPDIISRLEEEESYAMETDSRHTVICQGESHDDPLEPHQGNQEKLLTPITMNDPKTLTPERSYGSDEFERSSNLSKQSKDPLGKDPQEGTAPGICTSPQSASQENKHNRCEFCKRTFSTQVALRRHERIHTGKKPYECKQCAEAFYLMPHLNRHQKTHSGRKTSGCNEGRKPSVQCANLCERVRIHSQEDYFECFQCGKAFLQNVHLLQHLKAHEAARVLPPGLSHSKTYLIRYQRKHDYVGERACQCCDCGRVFSRNSYLIQHYRTHTQERPYQCQLCGKCFGRPSYLTQHYQLHSQEKTVECDHC.

Residues 1–16 are compositionally biased toward acidic residues; it reads MYQPEDDNNSDVTSDD. The disordered stretch occupies residues 1 to 104; that stretch reads MYQPEDDNNS…SRSQDAESYQ (104 aa). Basic and acidic residues-rich tracts occupy residues 17–26, 35–56, and 80–99; these read DMTRNRRESS, SGDRDWDRRGRSRDMEPRDRWS, and FEMDREDDRDSRAYESRSQD. The KRAB domain maps to 176 to 246; the sequence is VTFEDVLVDF…ETDSRHTVIC (71 aa). A disordered region spans residues 247–322; that stretch reads QGESHDDPLE…GICTSPQSAS (76 aa). Positions 259-275 are enriched in polar residues; it reads QGNQEKLLTPITMNDPK. A compositionally biased stretch (basic and acidic residues) spans 297–307; the sequence is QSKDPLGKDPQ. 5 C2H2-type zinc fingers span residues 328–350, 356–378, 412–434, 466–488, and 494–516; these read NRCEFCKRTFSTQVALRRHERIH, YECKQCAEAFYLMPHLNRHQKTH, FECFQCGKAFLQNVHLLQHLKAH, CQCCDCGRVFSRNSYLIQHYRTH, and YQCQLCGKCFGRPSYLTQHYQLH.

Belongs to the krueppel C2H2-type zinc-finger protein family. As to expression, highest levels of expression in adult testis; modest levels in fetal kidney and brain.

It localises to the nucleus. May be involved in transcriptional regulation. The protein is Zinc finger imprinted 2 (ZIM2) of Homo sapiens (Human).